The following is a 307-amino-acid chain: Ribosomal protein L11 methyltransferase (307 aa).

S-adenosyl-L-methionine is bound by residues Thr144, Gly165, Asp187, and Asn235.

This sequence belongs to the methyltransferase superfamily. PrmA family.

It is found in the cytoplasm. The catalysed reaction is L-lysyl-[protein] + 3 S-adenosyl-L-methionine = N(6),N(6),N(6)-trimethyl-L-lysyl-[protein] + 3 S-adenosyl-L-homocysteine + 3 H(+). Methylates ribosomal protein L11. The protein is Ribosomal protein L11 methyltransferase of Psychrobacter sp. (strain PRwf-1).